The sequence spans 88 residues: Small ribosomal subunit protein bS20 (88 aa).

Residues 1-25 (MANSPQAKKRARQNERRAEVNKARR) form a disordered region. Positions 12 to 22 (RQNERRAEVNK) are enriched in basic and acidic residues.

The protein belongs to the bacterial ribosomal protein bS20 family.

In terms of biological role, binds directly to 16S ribosomal RNA. The polypeptide is Small ribosomal subunit protein bS20 (Dinoroseobacter shibae (strain DSM 16493 / NCIMB 14021 / DFL 12)).